We begin with the raw amino-acid sequence, 183 residues long: Glutamyl-tRNA(Gln) amidotransferase subunit F, mitochondrial (183 aa).

The transit peptide at 1–23 directs the protein to the mitochondrion; that stretch reads MSRMLNQIPRLITRSFRTSSVGY.

Belongs to the GatF family. As to quaternary structure, subunit of the heterotrimeric GatFAB amidotransferase (AdT) complex, composed of A, B and F subunits.

It is found in the mitochondrion inner membrane. It catalyses the reaction L-glutamyl-tRNA(Gln) + L-glutamine + ATP + H2O = L-glutaminyl-tRNA(Gln) + L-glutamate + ADP + phosphate + H(+). Allows the formation of correctly charged Gln-tRNA(Gln) through the transamidation of misacylated Glu-tRNA(Gln) in the mitochondria. The reaction takes place in the presence of glutamine and ATP through an activated gamma-phospho-Glu-tRNA(Gln). Required for proper protein synthesis within the mitochondrion. The polypeptide is Glutamyl-tRNA(Gln) amidotransferase subunit F, mitochondrial (Debaryomyces hansenii (strain ATCC 36239 / CBS 767 / BCRC 21394 / JCM 1990 / NBRC 0083 / IGC 2968) (Yeast)).